We begin with the raw amino-acid sequence, 92 residues long: MANIASAKKRARQAENNRAHNAALRSRLRTYIKKVILAVDSGDLTKAQEAFRQAVPIIDSSVNKGLIHRNKAARSKSRLNARVKALALQAAS.

The segment at 1–20 (MANIASAKKRARQAENNRAH) is disordered.

This sequence belongs to the bacterial ribosomal protein bS20 family.

Binds directly to 16S ribosomal RNA. The sequence is that of Small ribosomal subunit protein bS20 from Methylococcus capsulatus (strain ATCC 33009 / NCIMB 11132 / Bath).